A 310-amino-acid polypeptide reads, in one-letter code: tRNA dimethylallyltransferase (310 aa).

Position 9-16 (glycine 9–threonine 16) interacts with ATP. Threonine 11 to threonine 16 is a substrate binding site. Residues aspartate 34–glutamine 37 are interaction with substrate tRNA.

This sequence belongs to the IPP transferase family. Monomer. The cofactor is Mg(2+).

The catalysed reaction is adenosine(37) in tRNA + dimethylallyl diphosphate = N(6)-dimethylallyladenosine(37) in tRNA + diphosphate. Functionally, catalyzes the transfer of a dimethylallyl group onto the adenine at position 37 in tRNAs that read codons beginning with uridine, leading to the formation of N6-(dimethylallyl)adenosine (i(6)A). The polypeptide is tRNA dimethylallyltransferase (Syntrophomonas wolfei subsp. wolfei (strain DSM 2245B / Goettingen)).